The following is a 2372-amino-acid chain: NBAS subunit of NRZ tethering complex (2372 aa).

WD repeat units lie at residues 119–158 (DPNP…LFII) and 304–343 (GEQD…LRGS). Residues 447–468 (LESSVKGEEDDGDDDSDSDEEA) form a disordered region. A compositionally biased stretch (acidic residues) spans 454–467 (EEDDGDDDSDSDEE). The stretch at 629-668 (YEDFLSMEEELEQRKERESKKRQELLKKVDFSKLTLEQKE) forms a coiled coil.

Its subcellular location is the endoplasmic reticulum. Functionally, involved in Golgi-to-endoplasmic reticulum (ER) retrograde transport; the function is proposed to depend on its association in the NRZ complex which is believed to play a role in SNARE assembly at the ER. Required for normal embryonic development. May play a role in the nonsense-mediated decay pathway of mRNAs containing premature stop codons. The sequence is that of NBAS subunit of NRZ tethering complex from Danio rerio (Zebrafish).